The sequence spans 361 residues: Inactive 2'-5'-oligoadenylate synthase 1D (361 aa).

Belongs to the 2-5A synthase family. Interacts with OAS1A, the interaction inhibits OAS1A catalytic activity. Expressed specifically in oocytes (at protein level). Expressed at highest level in ovary with lesser amounts in intestine, brain, thymus lung, kidney, liver and uterus.

The protein resides in the cytoplasm. In terms of biological role, does not have 2'-5'-oligoadenylate synthetase activity, but can bind double-stranded RNA. May play a role in the control of female fertility, possibly by binding to and inhibiting OAS1A. The protein is Inactive 2'-5'-oligoadenylate synthase 1D of Mus musculus (Mouse).